The sequence spans 1169 residues: Transcription-repair-coupling factor (1169 aa).

Residues 634-795 enclose the Helicase ATP-binding domain; that stretch reads DMERARPMDR…MLGVRDLSVI (162 aa). Position 647–654 (647–654) interacts with ATP; it reads GDVGYGKT. The DEEQ box motif lies at 748–751; sequence DEEQ. The region spanning 809–970 is the Helicase C-terminal domain; that stretch reads VLEQNTNFIK…GFKIAMRDLN (162 aa).

The protein in the N-terminal section; belongs to the UvrB family. In the C-terminal section; belongs to the helicase family. RecG subfamily.

It localises to the cytoplasm. Functionally, couples transcription and DNA repair by recognizing RNA polymerase (RNAP) stalled at DNA lesions. Mediates ATP-dependent release of RNAP and its truncated transcript from the DNA, and recruitment of nucleotide excision repair machinery to the damaged site. The sequence is that of Transcription-repair-coupling factor from Staphylococcus epidermidis (strain ATCC 35984 / DSM 28319 / BCRC 17069 / CCUG 31568 / BM 3577 / RP62A).